The chain runs to 91 residues: UPF0298 protein OB1449 (91 aa).

The protein belongs to the UPF0298 family.

It localises to the cytoplasm. The sequence is that of UPF0298 protein OB1449 from Oceanobacillus iheyensis (strain DSM 14371 / CIP 107618 / JCM 11309 / KCTC 3954 / HTE831).